A 271-amino-acid chain; its full sequence is Glutamate racemase (271 aa).

Substrate is bound by residues 13–14 and 45–46; these read DS and YG. Catalysis depends on Cys77, which acts as the Proton donor/acceptor. A substrate-binding site is contributed by 78-79; sequence NT. Cys192 (proton donor/acceptor) is an active-site residue. 193–194 lines the substrate pocket; sequence TH.

This sequence belongs to the aspartate/glutamate racemases family.

It carries out the reaction L-glutamate = D-glutamate. The protein operates within cell wall biogenesis; peptidoglycan biosynthesis. Its function is as follows. Provides the (R)-glutamate required for cell wall biosynthesis. The polypeptide is Glutamate racemase (Sinorhizobium medicae (strain WSM419) (Ensifer medicae)).